Here is a 155-residue protein sequence, read N- to C-terminus: Ribosomal RNA large subunit methyltransferase H (155 aa).

S-adenosyl-L-methionine is bound by residues L73, G104, and 123-128; that span reads LSPLTL.

Belongs to the RNA methyltransferase RlmH family. In terms of assembly, homodimer.

It localises to the cytoplasm. It carries out the reaction pseudouridine(1915) in 23S rRNA + S-adenosyl-L-methionine = N(3)-methylpseudouridine(1915) in 23S rRNA + S-adenosyl-L-homocysteine + H(+). Its function is as follows. Specifically methylates the pseudouridine at position 1915 (m3Psi1915) in 23S rRNA. This Pseudomonas fluorescens (strain ATCC BAA-477 / NRRL B-23932 / Pf-5) protein is Ribosomal RNA large subunit methyltransferase H.